A 299-amino-acid chain; its full sequence is Protease HtpX homolog (299 aa).

A run of 2 helical transmembrane segments spans residues 5–25 (IFLF…VLSV) and 44–64 (MVAL…MSLA). H155 is a Zn(2+) binding site. Residue E156 is part of the active site. H159 is a Zn(2+) binding site. The next 2 helical transmembrane spans lie at 170 to 190 (LLQG…AWIA) and 205 to 225 (FIAV…VVFA). E231 serves as a coordination point for Zn(2+).

It belongs to the peptidase M48B family. Requires Zn(2+) as cofactor.

The protein localises to the cell membrane. The polypeptide is Protease HtpX homolog (Bacillus pumilus (strain SAFR-032)).